The following is a 1675-amino-acid chain: MAQILPIRFQEHLQLQNLGINPANIGFSTLTMESDKFICIREKVGEQAQVVIIDMNDPSNPIRRPISADSAIMNPASKVIALKAGKTLQIFNIEMKSKMKAHTMTDDVTFWKWISLNTVALVTDNAVYHWSMEGESQPVKMFDRHSSLAGCQIINYRTDAKQKWLLLTGISAQQNRVVGAMQLYSVDRKVSQPIEGHAASFAQFKMEGNAEESTLFCFAVRGQAGGKLHIIEVGTPPTGNQPFPKKAVDVFFPPEAQNDFPVAMQISEKHDVVFLITKYGYIHLYDLETGTCIYMNRISGETIFVTAPHEATAGIIGVNRKGQVLSVCVEEENIIPYITNVLQNPDLALRMAVRNNLAGAEELFARKFNALFAQGNYSEAAKVAANAPKGILRTPDTIRRFQSVPAQPGQTSPLLQYFGILLDQGQLNKYESLELCRPVLQQGRKQLLEKWLKEDKLECSEELGDLVKSVDPTLALSVYLRANVPNKVIQCFAETGQVQKIVLYAKKVGYTPDWIFLLRNVMRISPDQGQQFAQMLVQDEEPLADITQIVDVFMEYNLIQQCTAFLLDALKNNRPSEGPLQTRLLEMNLMHAPQVADAILGNQMFTHYDRAHIAQLCEKAGLLQRALEHFTDLYDIKRAVVHTHLLNPEWLVNYFGSLSVEDSLECLRAMLSANIRQNLQICVQVASKYHEQLSTQSLIELFESFKSFEGLFYFLGSIVNFSQDPDVHFKYIQAACKTGQIKEVERICRESNCYDPERVKNFLKEAKLTDQLPLIIVCDRFDFVHDLVLYLYRNNLQKYIEIYVQKVNPSRLPVVIGGLLDVDCSEDVIKNLILVVRGQFSTDELVAEVEKRNRLKLLLPWLEARIHEGCEEPATHNALAKIYIDSNNNPERFLRENPYYDSRVVGKYCEKRDPHLACVAYERGQCDLELINVCNENSLFKSLSRYLVRRKDPELWGSVLLESNPYRRPLIDQVVQTALSETQDPEEVSVTVKAFMTADLPNELIELLEKIVLDNSVFSEHRNLQNLLILTAIKADRTRVMEYINRLDNYDAPDIANIAISNELFEEAFAIFRKFDVNTSAVQVLIEHIGNLDRAYEFAERCNEPAVWSQLAKAQLQKGMVKEAIDSYIKADDPSSYMEVVQAANTSGNWEELVKYLQMARKKARESYVETELIFALAKTNRLAELEEFINGPNNAHIQQVGDRCYDEKMYDAAKLLYNNVSNFGRLASTLVHLGEYQAAVDGARKANSTRTWKEVCFACVDGKEFRLAQMCGLHIVVHADELEELINYYQDRGYFEELITMLEAALGLERAHMGMFTELAILYSKFKPQKMREHLELFWSRVNIPKVLRAAEQAHLWAELVFLYDKYEEYDNAIITMMNHPTDAWKEGQFKDIITKVANVELYYRAIQFYLEFKPLLLNDLLMVLSPRLDHTRAVNYFSKVKQLPLVKPYLRSVQNHNNKSVNESLNNLFITEEDYQALRTSIDAYDNFDNISLAQRLEKHELIEFRRIAAYLFKGNNRWKQSVELCKKDSLYKDAMQYASESKDTELAEELLQWFLQEEKRECFGACLFTCYDLLRPDVVLETAWRHNIMDFAMPYFIQVMKEYLTKVDKLDASESLRKEEEQATETQPIVYGQPQLMLTAGPSVAVPPQAPFGYGYTAPAYGQPQPGFGYSM.

An N-acetylalanine modification is found at alanine 2. The tract at residues 2-479 (AQILPIRFQE…VDPTLALSVY (478 aa)) is globular terminal domain. 7 WD40-like repeat regions span residues 24 to 67 (NIGF…RPIS), 68 to 107 (ADSA…MTDD), 108 to 149 (VTFW…SSLA), 150 to 195 (GCQI…QPIE), 196 to 257 (GHAA…PEAQ), 258 to 301 (NDFP…ISGE), and 302 to 330 (TIFV…VCVE). Serine 67 carries the post-translational modification Phosphoserine. The residue at position 105 (threonine 105) is a Phosphothreonine. Tyrosine 184 is subject to Phosphotyrosine. Threonine 394 is subject to Phosphothreonine. The interval 449–465 (EKWLKEDKLECSEELGD) is binding site for the uncoating ATPase, involved in lattice disassembly. The segment at 480-523 (LRANVPNKVIQCFAETGQVQKIVLYAKKVGYTPDWIFLLRNVMR) is flexible linker. Residues 524-634 (ISPDQGQQFA…RALEHFTDLY (111 aa)) are distal segment. Positions 524–1675 (ISPDQGQQFA…QPQPGFGYSM (1152 aa)) are heavy chain arm. CHCR repeat units follow at residues 537–683 (VQDE…QICV), 686–828 (ASKY…SEDV), 833–972 (ILVV…PLID), 979–1124 (LSET…VKEA), 1128–1269 (YIKA…FRLA), 1274–1420 (LHIV…LLLN), and 1423–1566 (LMVL…RECF). A Phosphotyrosine modification is found at tyrosine 634. The interval 639 to 1675 (AVVHTHLLNP…QPQPGFGYSM (1037 aa)) is proximal segment. Lysine 737 carries the post-translational modification N6-succinyllysine. Lysine 856 carries the post-translational modification N6-acetyllysine. Position 899 is a phosphotyrosine (tyrosine 899). Serine 1167 bears the Phosphoserine mark. Tyrosine 1206 is subject to Phosphotyrosine. Residues 1213–1522 (AAKLLYNNVS…YLFKGNNRWK (310 aa)) are involved in binding clathrin light chain. The residue at position 1229 (serine 1229) is a Phosphoserine. The residue at position 1441 (lysine 1441) is an N6-acetyllysine; alternate. Lysine 1441 bears the N6-succinyllysine; alternate mark. Phosphotyrosine occurs at positions 1477 and 1487. Position 1494 is a phosphoserine (serine 1494). N6-acetyllysine is present on lysine 1501. Positions 1550 to 1675 (AEELLQWFLQ…QPQPGFGYSM (126 aa)) are trimerization.

The protein belongs to the clathrin heavy chain family. As to quaternary structure, clathrin triskelions, composed of 3 heavy chains and 3 light chains, are the basic subunits of the clathrin coat. In the presence of light chains, hub assembly is influenced by both the pH and the concentration of calcium. Interacts with HIP1. Interacts with DENND1A, DENND1B and DENND1C. Interacts with OCRL. Interacts with ERBB2. Interacts with FKBP6. Interacts with CKAP5 and TACC3 forming the TACC3/ch-TOG/clathrin complex located at spindle inter-microtubules bridges; the complex implicates clathrin triskelions; TACC3 and CLTC are proposed to form a composite microtubule interaction surface. Interacts with ATG16L1 (via N-terminus). Interacts with RFTN1; the interaction occurs in response to pathogens. Interacts with TMEM106B (via N-terminus). Interacts with DNAJC6; this interaction produces a local change in heavy-chain contacts, creating a detectable global distortion of the clathrin coat and leads to the recruitment of HSPA8.

Its subcellular location is the cytoplasmic vesicle membrane. The protein localises to the membrane. It localises to the coated pit. It is found in the melanosome. The protein resides in the cytoplasm. Its subcellular location is the cytoskeleton. The protein localises to the spindle. Clathrin is the major protein of the polyhedral coat of coated pits and vesicles. Two different adapter protein complexes link the clathrin lattice either to the plasma membrane or to the trans-Golgi network. Acts as a component of the TACC3/ch-TOG/clathrin complex proposed to contribute to stabilization of kinetochore fibers of the mitotic spindle by acting as inter-microtubule bridge. The TACC3/ch-TOG/clathrin complex is required for the maintenance of kinetochore fiber tension. Plays a role in early autophagosome formation. Interaction with DNAJC6 mediates the recruitment of HSPA8 to the clathrin lattice and creates local destabilization of the lattice promoting uncoating. This chain is Clathrin heavy chain 1, found in Bos taurus (Bovine).